Reading from the N-terminus, the 395-residue chain is Elongation factor Tu (395 aa).

Residues 10–204 (KTHANIGTIG…AVDSYIPTPE (195 aa)) enclose the tr-type G domain. Positions 19–26 (GHVDHGKT) are G1. 19-26 (GHVDHGKT) contacts GTP. Residue threonine 26 participates in Mg(2+) binding. The tract at residues 60 to 64 (GITIN) is G2. The G3 stretch occupies residues 81 to 84 (DCPG). GTP is bound by residues 81–85 (DCPGH) and 136–139 (NKCD). The interval 136 to 139 (NKCD) is G4. Residues 174–176 (SAL) are G5.

The protein belongs to the TRAFAC class translation factor GTPase superfamily. Classic translation factor GTPase family. EF-Tu/EF-1A subfamily. As to quaternary structure, monomer.

The protein resides in the cytoplasm. The enzyme catalyses GTP + H2O = GDP + phosphate + H(+). GTP hydrolase that promotes the GTP-dependent binding of aminoacyl-tRNA to the A-site of ribosomes during protein biosynthesis. The sequence is that of Elongation factor Tu from Lysinibacillus sphaericus (strain C3-41).